The sequence spans 407 residues: Argininosuccinate synthase (407 aa).

Residues 13 to 21 (AYSGGLDTS) and Ala-40 contribute to the ATP site. L-citrulline-binding residues include Tyr-91 and Ser-96. Gly-121 contacts ATP. Residues Thr-123, Asn-127, and Asp-128 each coordinate L-aspartate. Asn-127 contacts L-citrulline. Residues Arg-131, Ser-182, Ser-191, Glu-267, and Tyr-279 each contribute to the L-citrulline site.

It belongs to the argininosuccinate synthase family. Type 1 subfamily. As to quaternary structure, homotetramer.

The protein localises to the cytoplasm. It carries out the reaction L-citrulline + L-aspartate + ATP = 2-(N(omega)-L-arginino)succinate + AMP + diphosphate + H(+). The protein operates within amino-acid biosynthesis; L-arginine biosynthesis; L-arginine from L-ornithine and carbamoyl phosphate: step 2/3. This is Argininosuccinate synthase from Rhizobium etli (strain ATCC 51251 / DSM 11541 / JCM 21823 / NBRC 15573 / CFN 42).